A 254-amino-acid chain; its full sequence is DNA-3-methyladenine glycosylase (254 aa).

The span at 1-10 (MKTPARRSKR) shows a compositional bias: basic residues. Residues 1-20 (MKTPARRSKRVNQEESETNV) are disordered.

The protein belongs to the DNA glycosylase MPG family.

Its subcellular location is the nucleus. It carries out the reaction Hydrolysis of alkylated DNA, releasing 3-methyladenine, 3-methylguanine, 7-methylguanine and 7-methyladenine.. Functionally, hydrolysis of the deoxyribose N-glycosidic bond to excise 3-methyladenine, and 7-methylguanine from the damaged DNA polymer formed by alkylation lesions. The sequence is that of DNA-3-methyladenine glycosylase (MAG) from Arabidopsis thaliana (Mouse-ear cress).